We begin with the raw amino-acid sequence, 211 residues long: Ribosomal RNA small subunit methyltransferase G (211 aa).

S-adenosyl-L-methionine-binding positions include glycine 75, leucine 80, 130–131, and arginine 145; that span reads VE.

The protein belongs to the methyltransferase superfamily. RNA methyltransferase RsmG family.

It localises to the cytoplasm. It catalyses the reaction guanosine(527) in 16S rRNA + S-adenosyl-L-methionine = N(7)-methylguanosine(527) in 16S rRNA + S-adenosyl-L-homocysteine. In terms of biological role, specifically methylates the N7 position of guanine in position 527 of 16S rRNA. This Aromatoleum aromaticum (strain DSM 19018 / LMG 30748 / EbN1) (Azoarcus sp. (strain EbN1)) protein is Ribosomal RNA small subunit methyltransferase G.